Consider the following 96-residue polypeptide: UPF0235 protein YggU (96 aa).

It belongs to the UPF0235 family.

This is UPF0235 protein YggU from Shigella flexneri.